The sequence spans 481 residues: Threonine synthase (481 aa).

Residue K118 is modified to N6-(pyridoxal phosphate)lysine.

Belongs to the threonine synthase family. Monomer. It depends on pyridoxal 5'-phosphate as a cofactor.

It carries out the reaction O-phospho-L-homoserine + H2O = L-threonine + phosphate. It functions in the pathway amino-acid biosynthesis; L-threonine biosynthesis; L-threonine from L-aspartate: step 5/5. Its function is as follows. Catalyzes the gamma-elimination of phosphate from L-phosphohomoserine and the beta-addition of water to produce L-threonine. This is Threonine synthase (thrC) from Corynebacterium glutamicum (strain ATCC 13032 / DSM 20300 / JCM 1318 / BCRC 11384 / CCUG 27702 / LMG 3730 / NBRC 12168 / NCIMB 10025 / NRRL B-2784 / 534).